Consider the following 131-residue polypeptide: Small ribosomal subunit protein bS6 (131 aa).

Residues 96-131 are disordered; sequence VTAPSPMMKEEKSKSLLAKDEAAAPAPAPATEQATA. A compositionally biased stretch (basic and acidic residues) spans 103-117; the sequence is MKEEKSKSLLAKDEA. Positions 118–131 are enriched in low complexity; sequence AAPAPAPATEQATA.

Belongs to the bacterial ribosomal protein bS6 family.

In terms of biological role, binds together with bS18 to 16S ribosomal RNA. The polypeptide is Small ribosomal subunit protein bS6 (Methylobacillus flagellatus (strain ATCC 51484 / DSM 6875 / VKM B-1610 / KT)).